Consider the following 483-residue polypeptide: UDP-N-acetylmuramoyl-L-alanyl-D-glutamate--2,6-diaminopimelate ligase (483 aa).

Residue Ser29 participates in UDP-N-acetyl-alpha-D-muramoyl-L-alanyl-D-glutamate binding. An ATP-binding site is contributed by 107–113 (GTSGKTS). Residues 149–150 (TT), Ser176, Gln182, and Arg184 contribute to the UDP-N-acetyl-alpha-D-muramoyl-L-alanyl-D-glutamate site. N6-carboxylysine is present on Lys216. Meso-2,6-diaminopimelate is bound by residues Arg380, 404 to 407 (DNPR), Gly452, and Glu456. Positions 404-407 (DNPR) match the Meso-diaminopimelate recognition motif motif.

It belongs to the MurCDEF family. MurE subfamily. Mg(2+) serves as cofactor. In terms of processing, carboxylation is probably crucial for Mg(2+) binding and, consequently, for the gamma-phosphate positioning of ATP.

It is found in the cytoplasm. It carries out the reaction UDP-N-acetyl-alpha-D-muramoyl-L-alanyl-D-glutamate + meso-2,6-diaminopimelate + ATP = UDP-N-acetyl-alpha-D-muramoyl-L-alanyl-gamma-D-glutamyl-meso-2,6-diaminopimelate + ADP + phosphate + H(+). It participates in cell wall biogenesis; peptidoglycan biosynthesis. In terms of biological role, catalyzes the addition of meso-diaminopimelic acid to the nucleotide precursor UDP-N-acetylmuramoyl-L-alanyl-D-glutamate (UMAG) in the biosynthesis of bacterial cell-wall peptidoglycan. This Chelativorans sp. (strain BNC1) protein is UDP-N-acetylmuramoyl-L-alanyl-D-glutamate--2,6-diaminopimelate ligase.